A 544-amino-acid polypeptide reads, in one-letter code: Pectinesterase 3 (544 aa).

Asn174, Asn257, and Asn291 each carry an N-linked (GlcNAc...) asparagine glycan. Residues Thr306 and Gln336 each contribute to the substrate site. The Proton donor role is filled by Asp359. Asp380 serves as the catalytic Nucleophile. Positions 448 and 450 each coordinate substrate. Asn532 carries an N-linked (GlcNAc...) asparagine glycan.

In the N-terminal section; belongs to the PMEI family. This sequence in the C-terminal section; belongs to the pectinesterase family.

It localises to the secreted. The protein resides in the cell wall. It catalyses the reaction [(1-&gt;4)-alpha-D-galacturonosyl methyl ester](n) + n H2O = [(1-&gt;4)-alpha-D-galacturonosyl](n) + n methanol + n H(+). Its pathway is glycan metabolism; pectin degradation; 2-dehydro-3-deoxy-D-gluconate from pectin: step 1/5. Acts in the modification of cell walls via demethylesterification of cell wall pectin. This chain is Pectinesterase 3 (PME3), found in Solanum lycopersicum (Tomato).